The following is a 157-amino-acid chain: MFDVLMYLFETYIHNEPEMRVDQDQLTDDLAQAGFHRDDIYNALNWLEKLADLQEGENAPYFMDADPLAMRIYTEEEGVRLDASCRGFLLFLEQIQVLNLETREMVIDRVMALDNTEFDLEDLKWVVLMVLFNIPGYESAYQQMEELLFEVNEGYLH.

The protein belongs to the Smg family.

This is Protein Smg from Serratia proteamaculans (strain 568).